The following is a 178-amino-acid chain: Glutamyl-tRNA(Gln) amidotransferase subunit C, mitochondrial (178 aa).

The N-terminal 31 residues, 1–31 (MFRHIFTLGPRSISAITVRSRRALSSTAKPV), are a transit peptide targeting the mitochondrion. A disordered region spans residues 26–67 (STAKPVSAPVTSDDRPNLDVKHLKHPTKVPQQPHKSDIDRRQ). Positions 37–46 (SDDRPNLDVK) are enriched in basic and acidic residues.

It belongs to the GatC family. As to quaternary structure, subunit of the heterotrimeric GatCAB amidotransferase (AdT) complex, composed of A, B and C subunits.

Its subcellular location is the mitochondrion. It catalyses the reaction L-glutamyl-tRNA(Gln) + L-glutamine + ATP + H2O = L-glutaminyl-tRNA(Gln) + L-glutamate + ADP + phosphate + H(+). Functionally, allows the formation of correctly charged Gln-tRNA(Gln) through the transamidation of misacylated Glu-tRNA(Gln) in the mitochondria. The reaction takes place in the presence of glutamine and ATP through an activated gamma-phospho-Glu-tRNA(Gln). The chain is Glutamyl-tRNA(Gln) amidotransferase subunit C, mitochondrial from Aedes aegypti (Yellowfever mosquito).